The following is a 101-amino-acid chain: DET1- and DDB1-associated protein 1 (101 aa).

The segment at 67–101 is disordered; that stretch reads NAAKKRDQDQLEIGETSAPPRKIARTDSQEMNEDT.

The protein belongs to the DDA1 family. In terms of assembly, component of numerous DCX (DDB1-CUL4-X-box) E3 ubiquitin-protein ligase complexes which consist of a core of DDB1, cullin-4 (CUL4A or CUL4B), DDA1 and RBX1.

It participates in protein modification; protein ubiquitination. Functions as a component of numerous distinct DCX (DDB1-CUL4-X-box) E3 ubiquitin-protein ligase complexes which mediate the ubiquitination and subsequent proteasomal degradation of target proteins. In the DCX complexes, acts as a scaffolding subunit required to stabilize the complex. This is DET1- and DDB1-associated protein 1 from Xenopus laevis (African clawed frog).